The chain runs to 154 residues: MIRIFIDADACPVRDETYRVAQRHGLQTFVVSNRMIAIPSSPLIERIVVTQGMDVADDWIAEQVNAHDIVISADIPLAARCVARGACVLDPRGRILDEDAIGMALAMRNLMEDLRATGAITQGGRGFTRADRSTFLSALDTAVVRGRKRAAQAR.

Belongs to the UPF0178 family.

The chain is UPF0178 protein GDI0551/Gdia_1457 from Gluconacetobacter diazotrophicus (strain ATCC 49037 / DSM 5601 / CCUG 37298 / CIP 103539 / LMG 7603 / PAl5).